A 517-amino-acid chain; its full sequence is Ammonium transporter 3 (517 aa).

Over 1–32 the chain is Extracellular; it reads MLNEPNALLRRDANSTIATVTELFPNEYSNAD. The chain crosses the membrane as a helical span at residues 33–53; it reads IAYVLLSTVVVFTVTPGIALY. Over 54–69 the chain is Cytoplasmic; sequence YAGMVRKNSALSILTQ. A helical transmembrane segment spans residues 70-90; it reads SFLVTAVVFIQWYLFGYSLAC. The Extracellular segment spans residues 91–118; the sequence is SSGSSFYGTLWQGGMNHLWLEPYIPGST. A helical transmembrane segment spans residues 119–139; that stretch reads IPAIVYFPFGGLFAVATAQLF. Residues 140–148 lie on the Cytoplasmic side of the membrane; it reads AGAMAERGR. A helical transmembrane segment spans residues 149 to 169; that stretch reads LIPSLVISFLYITLVYCPQAY. At 170-180 the chain is on the extracellular side; that stretch reads WTWAPNGWLYT. Residues 181 to 201 form a helical membrane-spanning segment; the sequence is LGALDFAGGGPVHISSGFAAL. Over 202-272 the chain is Cytoplasmic; that stretch reads AYSLCLGRRI…AHNPPHDAGM (71 aa). A helical membrane pass occupies residues 273 to 293; it reads VYIGVVLIWFAWLCFNSGTLL. Residues 294–299 are Extracellular-facing; it reads TVNIRT. A helical transmembrane segment spans residues 300–320; the sequence is AYIMTNTLISSSFGALTWAII. Topologically, residues 321–327 are cytoplasmic; sequence DYIRYRK. Residues 328 to 348 form a helical membrane-spanning segment; sequence FSTIGICEGAIAGLVGITPAC. Residue Gly349 is a topological domain, extracellular. Residues 350 to 370 traverse the membrane as a helical segment; it reads FVFPWGAAAGGIVPALVCNFL. Residues 371 to 384 are Cytoplasmic-facing; sequence HDLNEWIGVDETLR. The chain crosses the membrane as a helical span at residues 385–405; sequence VFNLHGIGGIVGSIVLGVVAH. Residues 406-432 lie on the Extracellular side of the membrane; that stretch reads PDVAASDGATVIDGGWAVHHWKQMGYQ. The helical transmembrane segment at 433-453 threads the bilayer; it reads FAGFTSVAAWSFVITAIICLL. Residues 454-517 lie on the Cytoplasmic side of the membrane; that stretch reads VDLVPGLHIR…NIKQEKQDEF (64 aa).

Belongs to the ammonia transporter channel (TC 1.A.11.2) family.

Its subcellular location is the membrane. Its function is as follows. Transporter for ammonium to use as a nitrogen source. The protein is Ammonium transporter 3 (amt3) of Schizosaccharomyces pombe (strain 972 / ATCC 24843) (Fission yeast).